We begin with the raw amino-acid sequence, 233 residues long: MSTTAQDVEALVHSDDPNHPANHICTLCAKFYTLGWVTGTGGGTSIRHEDKIYIAPSGVQKELMKPTDMFVMDFESKEYLRRPQVLKPSACTPLFMAAFERGAGCCIHTHSQWAVLVTLLVERDLGTEACFEIEEIEQIKGIPKGRGKQGNLGYYDRLRIPIIENTAHEEDLRESLEAAMERWPDSYAILVRRHGIYVWGDNVHKAKTQCESIDYILQLAVEMKKLGLPWTKS.

Cys91 serves as a coordination point for substrate. Positions 108 and 110 each coordinate Zn(2+). Glu137 serves as the catalytic Proton donor/acceptor. His194 is a binding site for Zn(2+).

The protein belongs to the aldolase class II family. MtnB subfamily. Zn(2+) is required as a cofactor.

The protein localises to the cytoplasm. It catalyses the reaction 5-(methylsulfanyl)-D-ribulose 1-phosphate = 5-methylsulfanyl-2,3-dioxopentyl phosphate + H2O. The protein operates within amino-acid biosynthesis; L-methionine biosynthesis via salvage pathway; L-methionine from S-methyl-5-thio-alpha-D-ribose 1-phosphate: step 2/6. In terms of biological role, catalyzes the dehydration of methylthioribulose-1-phosphate (MTRu-1-P) into 2,3-diketo-5-methylthiopentyl-1-phosphate (DK-MTP-1-P). The sequence is that of Methylthioribulose-1-phosphate dehydratase from Phaeosphaeria nodorum (strain SN15 / ATCC MYA-4574 / FGSC 10173) (Glume blotch fungus).